Reading from the N-terminus, the 473-residue chain is Dihydrolipoyl dehydrogenase (473 aa).

FAD contacts are provided by residues 36–45, Lys54, and Ala117; that span reads ERYDKLGGVC. An intrachain disulfide couples Cys45 to Cys50. NAD(+)-binding positions include 182-186, Asp205, and 270-273; these read GSGII and AIGR. FAD is bound by residues Asp313 and Ala321. His445 acts as the Proton acceptor in catalysis.

It belongs to the class-I pyridine nucleotide-disulfide oxidoreductase family. Homodimer. Requires FAD as cofactor.

It is found in the cytoplasm. The catalysed reaction is N(6)-[(R)-dihydrolipoyl]-L-lysyl-[protein] + NAD(+) = N(6)-[(R)-lipoyl]-L-lysyl-[protein] + NADH + H(+). Lipoamide dehydrogenase is a component of the alpha-ketoacid dehydrogenase complexes. The protein is Dihydrolipoyl dehydrogenase (lpdA) of Buchnera aphidicola subsp. Acyrthosiphon pisum (strain APS) (Acyrthosiphon pisum symbiotic bacterium).